Consider the following 592-residue polypeptide: V-type ATP synthase alpha chain 1 (592 aa).

233-240 (GPFGSGKT) contacts ATP.

The protein belongs to the ATPase alpha/beta chains family.

The enzyme catalyses ATP + H2O + 4 H(+)(in) = ADP + phosphate + 5 H(+)(out). Produces ATP from ADP in the presence of a proton gradient across the membrane. The V-type alpha chain is a catalytic subunit. This is V-type ATP synthase alpha chain 1 from Clostridium tetani (strain Massachusetts / E88).